The sequence spans 424 residues: uncharacterized protein (424 aa).

It belongs to the serpin family.

This is an uncharacterized protein from Methanosarcina acetivorans (strain ATCC 35395 / DSM 2834 / JCM 12185 / C2A).